We begin with the raw amino-acid sequence, 368 residues long: tRNA-specific 2-thiouridylase MnmA (368 aa).

ATP-binding positions include 11–18 (GMSGGVDS) and Met-37. The interval 97–99 (NPD) is interaction with target base in tRNA. The Nucleophile role is filled by Cys-102. Cys-102 and Cys-199 are oxidised to a cystine. An ATP-binding site is contributed by Gly-127. The tract at residues 149–151 (KDQ) is interaction with tRNA. Cys-199 serves as the catalytic Cysteine persulfide intermediate. Residues 311 to 312 (RY) form an interaction with tRNA region.

It belongs to the MnmA/TRMU family. In terms of assembly, interacts with TusE.

It is found in the cytoplasm. It catalyses the reaction S-sulfanyl-L-cysteinyl-[protein] + uridine(34) in tRNA + AH2 + ATP = 2-thiouridine(34) in tRNA + L-cysteinyl-[protein] + A + AMP + diphosphate + H(+). Functionally, catalyzes the 2-thiolation of uridine at the wobble position (U34) of tRNA(Lys), tRNA(Glu) and tRNA(Gln), leading to the formation of s(2)U34, the first step of tRNA-mnm(5)s(2)U34 synthesis. Sulfur is provided by IscS, via a sulfur-relay system. Binds ATP and its substrate tRNAs. In Escherichia coli O1:K1 / APEC, this protein is tRNA-specific 2-thiouridylase MnmA.